The following is a 591-amino-acid chain: 5'-nucleotidase domain-containing protein DDB_G0275467 (591 aa).

Composition is skewed to low complexity over residues 38 to 50 (STTT…SYST) and 68 to 78 (QHQQQQPQQHQ). The tract at residues 38 to 88 (STTTTSGIKSYSTHNRSNNDTHTSKSNTIDQHQQQQPQQHQNNDNKHLFTP) is disordered. The active-site Nucleophile is the aspartate 165. Aspartate 165 and aspartate 167 together coordinate Mg(2+). Aspartate 167 (proton donor) is an active-site residue. 305 to 313 (TAAVGKVHL) serves as a coordination point for substrate. Aspartate 450 provides a ligand contact to Mg(2+).

The protein belongs to the 5'(3')-deoxyribonucleotidase family. Mg(2+) is required as a cofactor.

The polypeptide is 5'-nucleotidase domain-containing protein DDB_G0275467 (Dictyostelium discoideum (Social amoeba)).